Reading from the N-terminus, the 242-residue chain is Uridylate kinase (242 aa).

12–15 (KLSG) is an ATP binding site. The segment at 20–25 (GDEGFG) is involved in allosteric activation by GTP. Glycine 54 serves as a coordination point for UMP. ATP is bound by residues glycine 55 and arginine 59. Residues aspartate 74 and 135 to 142 (TGSPFFTT) each bind UMP. The ATP site is built by threonine 162, tyrosine 168, and aspartate 171.

This sequence belongs to the UMP kinase family. As to quaternary structure, homohexamer.

The protein localises to the cytoplasm. It carries out the reaction UMP + ATP = UDP + ADP. It functions in the pathway pyrimidine metabolism; CTP biosynthesis via de novo pathway; UDP from UMP (UMPK route): step 1/1. Allosterically activated by GTP. Inhibited by UTP. Catalyzes the reversible phosphorylation of UMP to UDP. In Pasteurella multocida (strain Pm70), this protein is Uridylate kinase.